The primary structure comprises 142 residues: MAKKVTGYLKLQVPAGAANPSPPIGPALGQRGLNIMEFCKAFNAQTQKEEKNTPIPVVITIYADRSFTFEMKTPPMSFFLKQAAKIQSGSKLPGRDSAGKVTSAQVREIAEKKMKDLNCDSIESAMRMVEGSARSMGLQVEG.

It belongs to the universal ribosomal protein uL11 family. In terms of assembly, part of the ribosomal stalk of the 50S ribosomal subunit. Interacts with L10 and the large rRNA to form the base of the stalk. L10 forms an elongated spine to which L12 dimers bind in a sequential fashion forming a multimeric L10(L12)X complex. One or more lysine residues are methylated.

In terms of biological role, forms part of the ribosomal stalk which helps the ribosome interact with GTP-bound translation factors. In Rhodopseudomonas palustris (strain HaA2), this protein is Large ribosomal subunit protein uL11.